The following is a 640-amino-acid chain: Chaperone protein HtpG (640 aa).

The interval 1 to 343 (MQTAENVEHL…SNDLPLNVSR (343 aa)) is a; substrate-binding. The segment at 344-564 (EILQESKDID…THDMSGNLGR (221 aa)) is b. Residues 565-640 (LLKSAGQKVP…LLLQNILSGK (76 aa)) are c.

It belongs to the heat shock protein 90 family. In terms of assembly, homodimer.

Its subcellular location is the cytoplasm. Functionally, molecular chaperone. Has ATPase activity. The chain is Chaperone protein HtpG from Nitrosomonas eutropha (strain DSM 101675 / C91 / Nm57).